Here is a 951-residue protein sequence, read N- to C-terminus: Translation initiation factor IF-2 (951 aa).

2 disordered regions span residues 58 to 255 (AERK…AVVI) and 305 to 329 (DVSRDKRRGRQPGRPISEEQAKSLS). Low complexity predominate over residues 101-170 (AEPQYAEPQQ…PQAQPAQPAA (70 aa)). A compositionally biased stretch (pro residues) spans 171 to 216 (PVAPPAPSAQPSAPQPPAAQPRPPQPPMPSRPPPAGYRPAPPPGAR). Residues 217–234 (PPMSAAPGAPAQPGAAGQ) are compositionally biased toward low complexity. In terms of domain architecture, tr-type G spans 450–619 (IRPPVVTVMG…ALQSEVLELK (170 aa)). The G1 stretch occupies residues 459–466 (GHVDHGKT). 459-466 (GHVDHGKT) provides a ligand contact to GTP. The tract at residues 484 to 488 (GITQH) is G2. The interval 505 to 508 (DTPG) is G3. Residues 505–509 (DTPGH) and 559–562 (NKVD) each bind GTP. The tract at residues 559 to 562 (NKVD) is G4. Residues 595–597 (SAR) form a G5 region.

Belongs to the TRAFAC class translation factor GTPase superfamily. Classic translation factor GTPase family. IF-2 subfamily.

Its subcellular location is the cytoplasm. In terms of biological role, one of the essential components for the initiation of protein synthesis. Protects formylmethionyl-tRNA from spontaneous hydrolysis and promotes its binding to the 30S ribosomal subunits. Also involved in the hydrolysis of GTP during the formation of the 70S ribosomal complex. The protein is Translation initiation factor IF-2 of Anaeromyxobacter dehalogenans (strain 2CP-1 / ATCC BAA-258).